Consider the following 290-residue polypeptide: 4-hydroxy-tetrahydrodipicolinate synthase (290 aa).

T45 is a binding site for pyruvate. The active-site Proton donor/acceptor is Y133. K161 serves as the catalytic Schiff-base intermediate with substrate. I202 serves as a coordination point for pyruvate.

It belongs to the DapA family. Homotetramer; dimer of dimers.

The protein resides in the cytoplasm. The catalysed reaction is L-aspartate 4-semialdehyde + pyruvate = (2S,4S)-4-hydroxy-2,3,4,5-tetrahydrodipicolinate + H2O + H(+). It functions in the pathway amino-acid biosynthesis; L-lysine biosynthesis via DAP pathway; (S)-tetrahydrodipicolinate from L-aspartate: step 3/4. Functionally, catalyzes the condensation of (S)-aspartate-beta-semialdehyde [(S)-ASA] and pyruvate to 4-hydroxy-tetrahydrodipicolinate (HTPA). In Alkalilimnicola ehrlichii (strain ATCC BAA-1101 / DSM 17681 / MLHE-1), this protein is 4-hydroxy-tetrahydrodipicolinate synthase.